We begin with the raw amino-acid sequence, 298 residues long: N-acetylmuramic acid 6-phosphate etherase (298 aa).

In terms of domain architecture, SIS spans 55–218 (ASKRYREGGR…STGVMIKQGK (164 aa)). E83 serves as the catalytic Proton donor. Residue E114 is part of the active site.

Belongs to the GCKR-like family. MurNAc-6-P etherase subfamily. As to quaternary structure, homodimer.

The enzyme catalyses N-acetyl-D-muramate 6-phosphate + H2O = N-acetyl-D-glucosamine 6-phosphate + (R)-lactate. The protein operates within amino-sugar metabolism; N-acetylmuramate degradation. Its function is as follows. Specifically catalyzes the cleavage of the D-lactyl ether substituent of MurNAc 6-phosphate, producing GlcNAc 6-phosphate and D-lactate. The polypeptide is N-acetylmuramic acid 6-phosphate etherase (Lactobacillus johnsonii (strain CNCM I-12250 / La1 / NCC 533)).